The chain runs to 1081 residues: Probable sucrose-phosphate synthase 2 (1081 aa).

3 disordered regions span residues 116-152 (EQGR…PRGN), 239-267 (EPTE…EDLG), and 760-780 (IKRQ…GDVP). Residues 256 to 267 (EPEEEEEEEDLG) are compositionally biased toward acidic residues.

Belongs to the glycosyltransferase 1 family. In terms of assembly, homodimer or homotetramer.

It catalyses the reaction beta-D-fructose 6-phosphate + UDP-alpha-D-glucose = sucrose 6(F)-phosphate + UDP + H(+). Its pathway is glycan biosynthesis; sucrose biosynthesis; sucrose from D-fructose 6-phosphate and UDP-alpha-D-glucose: step 1/2. Activity is regulated by phosphorylation and moderated by concentration of metabolites and light. In terms of biological role, plays a role in photosynthetic sucrose synthesis by catalyzing the rate-limiting step of sucrose biosynthesis from UDP-glucose and fructose- 6-phosphate. Involved in the regulation of carbon partitioning in the leaves of plants. May regulate the synthesis of sucrose and therefore play a major role as a limiting factor in the export of photoassimilates out of the leaf. Plays a role for sucrose availability that is essential for plant growth and fiber elongation. In Craterostigma plantagineum (Blue gem), this protein is Probable sucrose-phosphate synthase 2 (SPS2).